The sequence spans 312 residues: Olfactory receptor-like protein COR6 (312 aa).

At Met-1 to Pro-26 the chain is on the extracellular side. Asn-5 carries an N-linked (GlcNAc...) asparagine glycan. A helical transmembrane segment spans residues Leu-27 to Ile-49. The Cytoplasmic segment spans residues Ser-50 to Thr-57. A helical transmembrane segment spans residues Pro-58 to Pro-79. Residues Lys-80–Gln-100 are Extracellular-facing. Residues Cys-97 and Cys-179 are joined by a disulfide bond. Residues Tyr-101–Tyr-120 traverse the membrane as a helical segment. Topologically, residues Asp-121–Ala-139 are cytoplasmic. The helical transmembrane segment at Val-140 to Leu-164 threads the bilayer. Topologically, residues Lys-165–Leu-205 are extracellular. The chain crosses the membrane as a helical span at residues Phe-206 to Val-226. At Arg-227–Ser-239 the chain is on the cytoplasmic side. Residues Thr-240–Phe-260 traverse the membrane as a helical segment. Topologically, residues Gln-261–Asp-271 are extracellular. Residues Lys-272 to Trp-292 traverse the membrane as a helical segment. The Cytoplasmic segment spans residues Arg-293–His-312.

The protein belongs to the G-protein coupled receptor 1 family.

The protein resides in the cell membrane. Odorant receptor. This Gallus gallus (Chicken) protein is Olfactory receptor-like protein COR6 (COR6).